The sequence spans 3095 residues: HD protein homolog (3095 aa).

Disordered regions lie at residues 105-197, 536-561, 1312-1371, 1509-1547, and 2005-2037; these read PHQH…NGNA, QQQQQQQQQQQQQQQQHNLTSSTMSG, PPQQ…STVI, KSTSSSSSSSSTATSPSSSSSSTTTTTTTSTNTTTTTPS, and KELTNNNNNNNNNIIEKEEEEKEKEKEKVKEEE. A compositionally biased stretch (polar residues) spans 115–139; it reads STNLTDHLSQNSVTPSVPTTPNYQQ. 2 stretches are compositionally biased toward low complexity: residues 140–197 and 536–551; these read SPST…NGNA and QQQQQQQQQQQQQQQQ. Positions 552-561 are enriched in polar residues; that stretch reads HNLTSSTMSG. 3 stretches are compositionally biased toward low complexity: residues 1315–1368, 1510–1547, and 2008–2018; these read QQQQ…LNNS, STSSSSSSSSTATSPSSSSSSTTTTTTTSTNTTTTTPS, and TNNNNNNNNNI.

Belongs to the huntingtin family.

Its subcellular location is the cytoplasm. The protein resides in the nucleus. Functionally, may play a role in microtubule-mediated transport or vesicle function. The protein is HD protein homolog (htt) of Dictyostelium discoideum (Social amoeba).